The primary structure comprises 272 residues: Granaticin polyketide synthase putative ketoacyl reductase 1 (272 aa).

Position 21-45 (21-45 (LVTGATSGIGLAIARRLAALGARTF)) interacts with NAD(+). Substrate is bound at residue Ser155. The Proton acceptor role is filled by Tyr168.

This sequence belongs to the short-chain dehydrogenases/reductases (SDR) family.

Its pathway is antibiotic biosynthesis; granaticin biosynthesis. This is Granaticin polyketide synthase putative ketoacyl reductase 1 (gra-orf5) from Streptomyces violaceoruber.